Reading from the N-terminus, the 224-residue chain is MNLKNKKAICIMSGGMDSTLGAYMVKEMGYEIVALHFNYAQRTEAKELFCFKKICEALNVSNSYVLDLDFFSKIGASALTDKSIDIPINGLEEGVPITYVPFRNGIFLSIAAALAEKEEAVLIAIGVVQEDSSGYPDCKDSFITSMEQSINLGTKDETKIKIYMPLVHLSKSQIVEHALRLNVPLELTWSCYKDEEAACGVCDSCRLRLNGFRLANAKDPIEYM.

12 to 22 (MSGGMDSTLGA) is a binding site for ATP. Residues C191, C199, C202, and C205 each contribute to the Zn(2+) site.

This sequence belongs to the QueC family. Requires Zn(2+) as cofactor.

The catalysed reaction is 7-carboxy-7-deazaguanine + NH4(+) + ATP = 7-cyano-7-deazaguanine + ADP + phosphate + H2O + H(+). Its pathway is purine metabolism; 7-cyano-7-deazaguanine biosynthesis. Its function is as follows. Catalyzes the ATP-dependent conversion of 7-carboxy-7-deazaguanine (CDG) to 7-cyano-7-deazaguanine (preQ(0)). The sequence is that of 7-cyano-7-deazaguanine synthase from Sulfurimonas denitrificans (strain ATCC 33889 / DSM 1251) (Thiomicrospira denitrificans (strain ATCC 33889 / DSM 1251)).